The following is a 140-amino-acid chain: Nucleoside diphosphate kinase (140 aa).

The ATP site is built by Lys-11, Phe-59, Arg-87, Thr-93, Arg-104, and Asn-114. His-117 (pros-phosphohistidine intermediate) is an active-site residue.

This sequence belongs to the NDK family. Homotetramer. Mg(2+) is required as a cofactor.

The protein resides in the cytoplasm. It catalyses the reaction a 2'-deoxyribonucleoside 5'-diphosphate + ATP = a 2'-deoxyribonucleoside 5'-triphosphate + ADP. The enzyme catalyses a ribonucleoside 5'-diphosphate + ATP = a ribonucleoside 5'-triphosphate + ADP. In terms of biological role, major role in the synthesis of nucleoside triphosphates other than ATP. The ATP gamma phosphate is transferred to the NDP beta phosphate via a ping-pong mechanism, using a phosphorylated active-site intermediate. This is Nucleoside diphosphate kinase from Rickettsia prowazekii (strain Madrid E).